The following is a 674-amino-acid chain: Glutaminase kidney isoform, mitochondrial (674 aa).

A mitochondrion-targeting transit peptide spans Met-1–Leu-54. The disordered stretch occupies residues Pro-56–Ser-123. Residues Trp-58 to Gly-71 show a composition bias toward gly residues. The span at Pro-89 to Gly-101 shows a compositional bias: low complexity. An N6-succinyllysine mark is found at Lys-135 and Lys-169. Residue Ser-291 participates in substrate binding. N6-acetyllysine is present on Lys-316. Residues Gly-320–Phe-327 form a highly mobile activation loop region. Residues Asn-340, Glu-386, Asn-393, Tyr-419, Tyr-471, and Val-489 each coordinate substrate. ANK repeat units lie at residues Asp-590–Phe-619 and Trp-624–Pro-653. A disordered region spans residues Thr-652–Leu-674. Residue Ser-657 is modified to Phosphoserine. The segment covering Asp-658 to Leu-674 has biased composition (basic and acidic residues).

The protein belongs to the glutaminase family. In terms of assembly, homotetramer, dimer of dimers. Tetramer composed of 68 and 65 kDa peptides in a 1:3 ratio. Can assemble into higher oligomers (in vitro), but the physiological significance of this is not clear. Interacts with RAF1 and MAP2K2. Interacts with ATCAY; the interaction is direct and may control GLS localization, negatively regulating its activity. Post-translationally, synthesized as a 74-kDa cytosolic precursor which is proteolytically processed by the mitochondrial-processing peptidase (MPP) via a 72-kDa intermediate to yield the mature mitochondrial 68- and 65-kDa subunits. Kidney, brain, and intestine.

The protein resides in the mitochondrion. It is found in the cytoplasm. The protein localises to the cytosol. Its subcellular location is the mitochondrion matrix. It catalyses the reaction L-glutamine + H2O = L-glutamate + NH4(+). Enzyme activity is increased by phosphate, due to increased kcat and increased substrate affinity. In terms of biological role, catalyzes the first reaction in the primary pathway for the renal catabolism of glutamine. Plays a role in maintaining acid-base homeostasis. Regulates the levels of the neurotransmitter glutamate, the main excitatory neurotransmitter in the brain. The sequence is that of Glutaminase kidney isoform, mitochondrial (Gls) from Rattus norvegicus (Rat).